The following is a 151-amino-acid chain: MRSLIQRVKYASVSVDGQEVGAIEQGVLAYIGLGHDDNLQSAQRMIDKILTYRIFDNDDDPAKYGKVDKNVQQVGGGLLLVSQFTLMAKTDKGRRPEFGSAMAPDMAQALFAQLVDYAKTQYLTVATGQFGADMQVLSVNDGPLNFLLEVH.

A Gly-cisPro motif, important for rejection of L-amino acids motif is present at residues 142-143 (GP).

Belongs to the DTD family. In terms of assembly, homodimer.

It is found in the cytoplasm. The enzyme catalyses glycyl-tRNA(Ala) + H2O = tRNA(Ala) + glycine + H(+). The catalysed reaction is a D-aminoacyl-tRNA + H2O = a tRNA + a D-alpha-amino acid + H(+). In terms of biological role, an aminoacyl-tRNA editing enzyme that deacylates mischarged D-aminoacyl-tRNAs. Also deacylates mischarged glycyl-tRNA(Ala), protecting cells against glycine mischarging by AlaRS. Acts via tRNA-based rather than protein-based catalysis; rejects L-amino acids rather than detecting D-amino acids in the active site. By recycling D-aminoacyl-tRNA to D-amino acids and free tRNA molecules, this enzyme counteracts the toxicity associated with the formation of D-aminoacyl-tRNA entities in vivo and helps enforce protein L-homochirality. The chain is D-aminoacyl-tRNA deacylase from Psychrobacter cryohalolentis (strain ATCC BAA-1226 / DSM 17306 / VKM B-2378 / K5).